The following is a 1356-amino-acid chain: RHO1 GDP-GTP exchange protein 2 (1356 aa).

S2 is modified (N-acetylserine). 2 disordered regions span residues 74 to 94 (RRSG…EMKG) and 109 to 175 (EVPD…PRNE). A Phosphoserine modification is found at S76. 2 stretches are compositionally biased toward polar residues: residues 109–125 (EVPD…TPVS) and 147–157 (HIYSTSNSASR). Residue S193 is modified to Phosphoserine. 5 disordered regions span residues 202–291 (LKKQ…RSMS), 303–362 (SFQS…SSSN), 383–409 (SVSG…VMSA), 531–571 (GNHS…SQQK), and 626–645 (NISM…TSSV). The span at 204–221 (KQSSFSTGSASTTPTQAR) shows a compositional bias: polar residues. At S223 the chain carries Phosphoserine. Basic and acidic residues predominate over residues 235–244 (SSKDLHEQHQ). Low complexity predominate over residues 250-265 (QHNNINNHNNNNTNNN). Residues 271–281 (VGSSNSNYPQH) are compositionally biased toward polar residues. Over residues 282–291 (SHSISSRSMS) the composition is skewed to low complexity. The segment covering 303 to 325 (SFQSKTSNSRKATQKYDITSNPF) has biased composition (polar residues). Residues 329 to 338 (HHHHHHHHSS) show a composition bias toward basic residues. 2 stretches are compositionally biased toward low complexity: residues 339–362 (NSHS…SSSN) and 383–401 (SVSG…TPLS). S566 and S628 each carry phosphoserine. The region spanning 659–846 (KRQEAIYEVY…RDFMKRIDQA (188 aa)) is the DH domain. In terms of domain architecture, CNH spans 1034 to 1336 (TNKINSVTSC…RLLQTSTQEI (303 aa)).

In terms of biological role, stimulates the exchange of RHO1 GDP-bound form into GTP-bound form. The polypeptide is RHO1 GDP-GTP exchange protein 2 (ROM2) (Saccharomyces cerevisiae (strain ATCC 204508 / S288c) (Baker's yeast)).